The primary structure comprises 504 residues: Maturase K (504 aa).

It belongs to the intron maturase 2 family. MatK subfamily.

Its subcellular location is the plastid. The protein resides in the chloroplast. Its function is as follows. Usually encoded in the trnK tRNA gene intron. Probably assists in splicing its own and other chloroplast group II introns. This Calyptranthes pallens (Spicewood) protein is Maturase K.